The sequence spans 364 residues: Chaperone protein DnaJ (364 aa).

The J domain maps to 5–71; sequence DYYEILGVAK…QKRQAYDQFG (67 aa). The segment at 127–205 adopts a CR-type zinc-finger fold; the sequence is GSTVKIRIPK…CRGQGLVRKQ (79 aa). The Zn(2+) site is built by Cys140, Cys143, Cys157, Cys160, Cys179, Cys182, Cys193, and Cys196. CXXCXGXG motif repeat units lie at residues 140-147, 157-164, 179-186, and 193-200; these read CDTCSGIG, CSICSGVG, CGTCSGTG, and CGTCRGQG.

The protein belongs to the DnaJ family. Homodimer. Requires Zn(2+) as cofactor.

Its subcellular location is the cytoplasm. In terms of biological role, participates actively in the response to hyperosmotic and heat shock by preventing the aggregation of stress-denatured proteins and by disaggregating proteins, also in an autonomous, DnaK-independent fashion. Unfolded proteins bind initially to DnaJ; upon interaction with the DnaJ-bound protein, DnaK hydrolyzes its bound ATP, resulting in the formation of a stable complex. GrpE releases ADP from DnaK; ATP binding to DnaK triggers the release of the substrate protein, thus completing the reaction cycle. Several rounds of ATP-dependent interactions between DnaJ, DnaK and GrpE are required for fully efficient folding. Also involved, together with DnaK and GrpE, in the DNA replication of plasmids through activation of initiation proteins. In Ruthia magnifica subsp. Calyptogena magnifica, this protein is Chaperone protein DnaJ.